A 256-amino-acid chain; its full sequence is Cell division protein ZipA (256 aa).

Residues 1–6 are Periplasmic-facing; that stretch reads MQYGRQ. The chain crosses the membrane as a helical span at residues 7 to 27; sequence ILICIGILTVIILLLYGLLNS. The Cytoplasmic segment spans residues 28 to 256; sequence YWDRTVTFCK…RHVLSANKST (229 aa).

Belongs to the ZipA family. Interacts with FtsZ via their C-terminal domains.

The protein resides in the cell inner membrane. Essential cell division protein that stabilizes the FtsZ protofilaments by cross-linking them and that serves as a cytoplasmic membrane anchor for the Z ring. Also required for the recruitment to the septal ring of downstream cell division proteins. This chain is Cell division protein ZipA, found in Baumannia cicadellinicola subsp. Homalodisca coagulata.